A 258-amino-acid polypeptide reads, in one-letter code: Thymidylate synthase (258 aa).

Arginine 21 contacts dUMP. Histidine 51 contributes to the (6R)-5,10-methylene-5,6,7,8-tetrahydrofolate binding site. Position 121-122 (arginine 121–arginine 122) interacts with dUMP. Catalysis depends on cysteine 141, which acts as the Nucleophile. Residues arginine 161 to aspartate 164, asparagine 172, and histidine 202 to tyrosine 204 contribute to the dUMP site. Position 164 (aspartate 164) interacts with (6R)-5,10-methylene-5,6,7,8-tetrahydrofolate. Alanine 257 serves as a coordination point for (6R)-5,10-methylene-5,6,7,8-tetrahydrofolate.

The protein belongs to the thymidylate synthase family. Bacterial-type ThyA subfamily. As to quaternary structure, homodimer.

The protein resides in the cytoplasm. The enzyme catalyses dUMP + (6R)-5,10-methylene-5,6,7,8-tetrahydrofolate = 7,8-dihydrofolate + dTMP. It participates in pyrimidine metabolism; dTTP biosynthesis. Its function is as follows. Catalyzes the reductive methylation of 2'-deoxyuridine-5'-monophosphate (dUMP) to 2'-deoxythymidine-5'-monophosphate (dTMP) while utilizing 5,10-methylenetetrahydrofolate (mTHF) as the methyl donor and reductant in the reaction, yielding dihydrofolate (DHF) as a by-product. This enzymatic reaction provides an intracellular de novo source of dTMP, an essential precursor for DNA biosynthesis. This chain is Thymidylate synthase, found in Dichelobacter nodosus (strain VCS1703A).